We begin with the raw amino-acid sequence, 168 residues long: Inorganic pyrophosphatase (168 aa).

The substrate site is built by Lys23, Arg37, and Tyr49. Mg(2+) is bound by residues Asp59, Asp64, and Asp96. Residue Tyr133 participates in substrate binding.

The protein belongs to the PPase family. In terms of assembly, homohexamer. It depends on Mg(2+) as a cofactor.

The protein localises to the cytoplasm. The enzyme catalyses diphosphate + H2O = 2 phosphate + H(+). In terms of biological role, catalyzes the hydrolysis of inorganic pyrophosphate (PPi) forming two phosphate ions. In Methanosarcina acetivorans (strain ATCC 35395 / DSM 2834 / JCM 12185 / C2A), this protein is Inorganic pyrophosphatase.